The primary structure comprises 199 residues: Inosine triphosphate pyrophosphatase (199 aa).

12–17 contacts ITP; sequence TGNAKK. Glu-42 is a binding site for Mg(2+). ITP contacts are provided by residues Lys-54, 70–71, Lys-87, 146–149, Lys-169, and 174–175; these read DT, FGWD, and HR.

Belongs to the HAM1 NTPase family. Homodimer. Mg(2+) is required as a cofactor. Requires Mn(2+) as cofactor.

Its subcellular location is the cytoplasm. The enzyme catalyses ITP + H2O = IMP + diphosphate + H(+). It carries out the reaction dITP + H2O = dIMP + diphosphate + H(+). The catalysed reaction is XTP + H2O = XMP + diphosphate + H(+). In terms of biological role, pyrophosphatase that hydrolyzes non-canonical purine nucleotides such as inosine triphosphate (ITP), deoxyinosine triphosphate (dITP) or xanthosine 5'-triphosphate (XTP) to their respective monophosphate derivatives. The enzyme does not distinguish between the deoxy- and ribose forms. Probably excludes non-canonical purines from RNA and DNA precursor pools, thus preventing their incorporation into RNA and DNA and avoiding chromosomal lesions. In Monosiga brevicollis (Choanoflagellate), this protein is Inosine triphosphate pyrophosphatase.